Consider the following 244-residue polypeptide: Phosphoadenosine 5'-phosphosulfate reductase (244 aa).

Catalysis depends on Cys-239, which acts as the Nucleophile; cysteine thiosulfonate intermediate.

This sequence belongs to the PAPS reductase family. CysH subfamily.

The protein resides in the cytoplasm. The enzyme catalyses [thioredoxin]-disulfide + sulfite + adenosine 3',5'-bisphosphate + 2 H(+) = [thioredoxin]-dithiol + 3'-phosphoadenylyl sulfate. The protein operates within sulfur metabolism; hydrogen sulfide biosynthesis; sulfite from sulfate: step 3/3. Functionally, catalyzes the formation of sulfite from phosphoadenosine 5'-phosphosulfate (PAPS) using thioredoxin as an electron donor. In Pectobacterium carotovorum subsp. carotovorum (strain PC1), this protein is Phosphoadenosine 5'-phosphosulfate reductase.